Here is a 315-residue protein sequence, read N- to C-terminus: 4-hydroxy-3-methylbut-2-enyl diphosphate reductase (315 aa).

Residue Cys-12 participates in [4Fe-4S] cluster binding. Positions 41 and 74 each coordinate (2E)-4-hydroxy-3-methylbut-2-enyl diphosphate. 2 residues coordinate dimethylallyl diphosphate: His-41 and His-74. His-41 and His-74 together coordinate isopentenyl diphosphate. Cys-96 provides a ligand contact to [4Fe-4S] cluster. A (2E)-4-hydroxy-3-methylbut-2-enyl diphosphate-binding site is contributed by His-124. His-124 provides a ligand contact to dimethylallyl diphosphate. His-124 provides a ligand contact to isopentenyl diphosphate. Glu-126 (proton donor) is an active-site residue. Thr-168 lines the (2E)-4-hydroxy-3-methylbut-2-enyl diphosphate pocket. Cys-198 is a [4Fe-4S] cluster binding site. 4 residues coordinate (2E)-4-hydroxy-3-methylbut-2-enyl diphosphate: Ser-226, Ser-227, Asn-228, and Ser-270. Residues Ser-226, Ser-227, Asn-228, and Ser-270 each contribute to the dimethylallyl diphosphate site. Isopentenyl diphosphate-binding residues include Ser-226, Ser-227, Asn-228, and Ser-270.

It belongs to the IspH family. It depends on [4Fe-4S] cluster as a cofactor.

The catalysed reaction is isopentenyl diphosphate + 2 oxidized [2Fe-2S]-[ferredoxin] + H2O = (2E)-4-hydroxy-3-methylbut-2-enyl diphosphate + 2 reduced [2Fe-2S]-[ferredoxin] + 2 H(+). It catalyses the reaction dimethylallyl diphosphate + 2 oxidized [2Fe-2S]-[ferredoxin] + H2O = (2E)-4-hydroxy-3-methylbut-2-enyl diphosphate + 2 reduced [2Fe-2S]-[ferredoxin] + 2 H(+). Its pathway is isoprenoid biosynthesis; dimethylallyl diphosphate biosynthesis; dimethylallyl diphosphate from (2E)-4-hydroxy-3-methylbutenyl diphosphate: step 1/1. It participates in isoprenoid biosynthesis; isopentenyl diphosphate biosynthesis via DXP pathway; isopentenyl diphosphate from 1-deoxy-D-xylulose 5-phosphate: step 6/6. Its function is as follows. Catalyzes the conversion of 1-hydroxy-2-methyl-2-(E)-butenyl 4-diphosphate (HMBPP) into a mixture of isopentenyl diphosphate (IPP) and dimethylallyl diphosphate (DMAPP). Acts in the terminal step of the DOXP/MEP pathway for isoprenoid precursor biosynthesis. In Azotobacter vinelandii (strain DJ / ATCC BAA-1303), this protein is 4-hydroxy-3-methylbut-2-enyl diphosphate reductase.